The primary structure comprises 443 residues: Tubulin beta-2 chain (443 aa).

Residues 1-4 (MREI) carry the MREI motif motif. Residues Gln11, Glu69, Ser138, Gly142, Thr143, Gly144, Asn204, and Asn226 each contribute to the GTP site. Glu69 lines the Mg(2+) pocket. Glu438 bears the 5-glutamyl polyglutamate mark.

Belongs to the tubulin family. In terms of assembly, dimer of alpha and beta chains. A typical microtubule is a hollow water-filled tube with an outer diameter of 25 nm and an inner diameter of 15 nM. Alpha-beta heterodimers associate head-to-tail to form protofilaments running lengthwise along the microtubule wall with the beta-tubulin subunit facing the microtubule plus end conferring a structural polarity. Microtubules usually have 13 protofilaments but different protofilament numbers can be found in some organisms and specialized cells. Requires Mg(2+) as cofactor. In terms of processing, some glutamate residues at the C-terminus are polyglycylated, resulting in polyglycine chains on the gamma-carboxyl group. Glycylation is mainly limited to tubulin incorporated into axonemes (cilia and flagella) whereas glutamylation is prevalent in neuronal cells, centrioles, axonemes, and the mitotic spindle. Both modifications can coexist on the same protein on adjacent residues, and lowering polyglycylation levels increases polyglutamylation, and reciprocally. The precise function of polyglycylation is still unclear. Some glutamate residues at the C-terminus are polyglutamylated, resulting in polyglutamate chains on the gamma-carboxyl group. Polyglutamylation plays a key role in microtubule severing by spastin (SPAST). SPAST preferentially recognizes and acts on microtubules decorated with short polyglutamate tails: severing activity by SPAST increases as the number of glutamates per tubulin rises from one to eight, but decreases beyond this glutamylation threshold. In terms of tissue distribution, nervous system specific.

Its subcellular location is the cytoplasm. It localises to the cytoskeleton. Tubulin is the major constituent of microtubules, a cylinder consisting of laterally associated linear protofilaments composed of alpha- and beta-tubulin heterodimers. Microtubules grow by the addition of GTP-tubulin dimers to the microtubule end, where a stabilizing cap forms. Below the cap, tubulin dimers are in GDP-bound state, owing to GTPase activity of alpha-tubulin. In Xenopus laevis (African clawed frog), this protein is Tubulin beta-2 chain (tubb2).